The chain runs to 224 residues: UPF0758 protein RSc2444 (224 aa).

The MPN domain occupies 102–224 (TLESPQSVKD…VYSFLEHGKM (123 aa)). Residues H173, H175, and D186 each contribute to the Zn(2+) site. The JAMM motif signature appears at 173–186 (HNHPTGHVEPSESD).

Belongs to the UPF0758 family.

This chain is UPF0758 protein RSc2444, found in Ralstonia nicotianae (strain ATCC BAA-1114 / GMI1000) (Ralstonia solanacearum).